We begin with the raw amino-acid sequence, 284 residues long: Steroidogenic acute regulatory protein, mitochondrial (284 aa).

The transit peptide at 1-62 (MFLATFKLCA…RRSSLLGSQL (62 aa)) directs the protein to the mitochondrion. A phosphoserine; by PKA mark is found at serine 56 and serine 194. Residues 66 to 279 (LYSDQELSYI…LRKRLEASPA (214 aa)) form the START domain.

In terms of assembly, may interact with TSPO. In terms of tissue distribution, expressed within glia and neurons in discrete regions of the brain.

It localises to the mitochondrion. The catalysed reaction is cholesterol(in) = cholesterol(out). It participates in steroid metabolism; cholesterol metabolism. Plays a key role in steroid hormone synthesis by enhancing the metabolism of cholesterol into pregnenolone. Transporter that binds to and transport cholesterol through the intermembrane space of the mitochondrion. The protein is Steroidogenic acute regulatory protein, mitochondrial (Star) of Mus musculus (Mouse).